The primary structure comprises 427 residues: Dihydroorotase (427 aa).

Residues H57 and H59 each contribute to the Zn(2+) site. Residues 59–61 and N91 each bind substrate; that span reads HLR. Residues D149, H176, and H229 each contribute to the Zn(2+) site. N275 is a binding site for substrate. D302 contributes to the Zn(2+) binding site. The active site involves D302. Substrate is bound by residues H306 and 320 to 321; that span reads FG.

The protein belongs to the metallo-dependent hydrolases superfamily. DHOase family. Class I DHOase subfamily. Zn(2+) is required as a cofactor.

It catalyses the reaction (S)-dihydroorotate + H2O = N-carbamoyl-L-aspartate + H(+). Its pathway is pyrimidine metabolism; UMP biosynthesis via de novo pathway; (S)-dihydroorotate from bicarbonate: step 3/3. In terms of biological role, catalyzes the reversible cyclization of carbamoyl aspartate to dihydroorotate. This is Dihydroorotase from Shouchella clausii (strain KSM-K16) (Alkalihalobacillus clausii).